Reading from the N-terminus, the 247-residue chain is Neurotrophic factor BDNF precursor form (247 aa).

An N-terminal signal peptide occupies residues Met1–Ala18. A propeptide spanning residues Ala19 to Arg128 is cleaved from the precursor. A glycan (N-linked (GlcNAc...) asparagine) is linked at Asn121. 3 disulfide bridges follow: Cys141–Cys208, Cys186–Cys237, and Cys196–Cys239.

Belongs to the NGF-beta family. Monomers and homodimers. Binds to NTRK2/TRKB. Can form heterodimers with other neurotrophin family members, such as NTF3 and NTF4 (in vitro), but the physiological relevance of this is not clear. BDNF precursor form: interacts with the heterodimer formed by NGFR and SORCS2. Mature BDNF has much lower affinity for the heterodimer formed by NGFR and SORCS2. Post-translationally, N-glycosylated and glycosulfated, contrary to mature BDNF. Mature BDNF is produced by proteolytic removal of the propeptide, catalyzed by a FURIN family member. In addition, the precursor form is proteolytically cleaved within the propeptide, but this is not an obligatory intermediate for the production of mature BDNF. Can be converted into mature BDNF by plasmin (PLG).

The protein localises to the secreted. Functionally, important signaling molecule that activates signaling cascades downstream of NTRK2. During development, promotes the survival and differentiation of selected neuronal populations of the peripheral and central nervous systems. Participates in axonal growth, pathfinding and in the modulation of dendritic growth and morphology. Major regulator of synaptic transmission and plasticity at adult synapses in many regions of the CNS. The versatility of BDNF is emphasized by its contribution to a range of adaptive neuronal responses including long-term potentiation (LTP), long-term depression (LTD), certain forms of short-term synaptic plasticity, as well as homeostatic regulation of intrinsic neuronal excitability. Its function is as follows. Important signaling molecule that activates signaling cascades downstream of NTRK2. Activates signaling cascades via the heterodimeric receptor formed by NGFR and SORCS2. Signaling via NGFR and SORCS2 plays a role in synaptic plasticity and long-term depression (LTD). Binding to NGFR and SORCS2 promotes neuronal apoptosis. Promotes neuronal growth cone collapse. This Ailuropoda melanoleuca (Giant panda) protein is Neurotrophic factor BDNF precursor form (BDNF).